A 157-amino-acid polypeptide reads, in one-letter code: S-ribosylhomocysteine lyase (157 aa).

3 residues coordinate Fe cation: His-54, His-58, and Cys-124.

It belongs to the LuxS family. Homodimer. It depends on Fe cation as a cofactor.

It catalyses the reaction S-(5-deoxy-D-ribos-5-yl)-L-homocysteine = (S)-4,5-dihydroxypentane-2,3-dione + L-homocysteine. In terms of biological role, involved in the synthesis of autoinducer 2 (AI-2) which is secreted by bacteria and is used to communicate both the cell density and the metabolic potential of the environment. The regulation of gene expression in response to changes in cell density is called quorum sensing. Catalyzes the transformation of S-ribosylhomocysteine (RHC) to homocysteine (HC) and 4,5-dihydroxy-2,3-pentadione (DPD). This Lacticaseibacillus paracasei (strain ATCC 334 / BCRC 17002 / CCUG 31169 / CIP 107868 / KCTC 3260 / NRRL B-441) (Lactobacillus paracasei) protein is S-ribosylhomocysteine lyase.